The following is a 790-amino-acid chain: PGC-1 and ERR-induced regulator in muscle protein 1 (790 aa).

Disordered regions lie at residues 38–391 (LLSS…TPIS), 425–449 (VASS…STPV), 507–545 (SVAG…EAVA), and 626–648 (QRSR…APIP). The span at 40–52 (SSDIDQGDSSGSS) shows a compositional bias: low complexity. 2 stretches are compositionally biased toward polar residues: residues 80 to 89 (ATQQPVSRSQ) and 98 to 107 (TGQQTPSTSA). Low complexity predominate over residues 111-123 (APPSLGPGASPPS). Positions 146 to 157 (APRPPGEPPGSP) are enriched in pro residues. The span at 158–169 (KSPGHSTGSQRP) shows a compositional bias: low complexity. The span at 170–179 (PDSPGAPPRS) shows a compositional bias: pro residues. Over residues 366–391 (KPQSDTAVSTPASEPQSSVALSTPIS) the composition is skewed to polar residues. A compositionally biased stretch (polar residues) spans 515-532 (KPGSGQASARPSAPQTAT). Residues 635–648 (EPLPRADPVPAPIP) are compositionally biased toward pro residues.

Muscle-specific expression is increased by endurance exercise.

The protein resides in the cytoplasm. It is found in the nucleus. Functionally, regulates the expression of selective PPARGC1A/B and ESRRA/B/G target genes with roles in glucose and lipid metabolism, energy transfer, contractile function, muscle mitochondrial biogenesis and oxidative capacity. Required for the efficient induction of MT-CO2, MT-CO3, COX4I1, TFB1M, TFB2M, POLRMT and SIRT3 by PPARGC1A. Positively regulates the PPARGC1A/ESRRG-induced expression of CKMT2, TNNI3 and SLC2A4 and negatively regulates the PPARGC1A/ESRRG-induced expression of PDK4. This chain is PGC-1 and ERR-induced regulator in muscle protein 1 (PERM1), found in Homo sapiens (Human).